The primary structure comprises 499 residues: Glutelin type-A 1 (499 aa).

A signal peptide spans 1-24 (MASINRPIVFFTVCLFLLCNGSLA). Cystine bridges form between cysteine 46/cysteine 79 and cysteine 122/cysteine 313. Cupin type-1 domains follow at residues 51-248 (LQAF…QVAR) and 319-468 (QNID…EEAQ).

The protein belongs to the 11S seed storage protein (globulins) family. As to quaternary structure, hexamer; each subunit is composed of an acidic and a basic chain derived from a single precursor and linked by a disulfide bond.

Its function is as follows. Seed storage protein. This is Glutelin type-A 1 (GLUA1) from Oryza sativa subsp. japonica (Rice).